A 122-amino-acid chain; its full sequence is MARLAGVDLPRNKRMEVALTYIYGIGPTSAKQLLEKTEISPDLRTDALTDDQVAKLRDAIEAEYTVEGDLRRQVQADIRRKIEIGSYQGLRHRRGLPVRGQRTKTNARTRKGPKKTIAGKKK.

Residues 93 to 122 (RRGLPVRGQRTKTNARTRKGPKKTIAGKKK) are disordered.

It belongs to the universal ribosomal protein uS13 family. In terms of assembly, part of the 30S ribosomal subunit. Forms a loose heterodimer with protein S19. Forms two bridges to the 50S subunit in the 70S ribosome.

Functionally, located at the top of the head of the 30S subunit, it contacts several helices of the 16S rRNA. In the 70S ribosome it contacts the 23S rRNA (bridge B1a) and protein L5 of the 50S subunit (bridge B1b), connecting the 2 subunits; these bridges are implicated in subunit movement. Contacts the tRNAs in the A and P-sites. The protein is Small ribosomal subunit protein uS13 of Corynebacterium kroppenstedtii (strain DSM 44385 / JCM 11950 / CIP 105744 / CCUG 35717).